The sequence spans 518 residues: Sensor protein kinase HptS (518 aa).

2 helical membrane-spanning segments follow: residues 20–40 (IFPVFLVIIIGLVSFYAIYIW) and 222–242 (GITLLIVMAVVLVLLVIFGFI). The Histidine kinase domain maps to 297–513 (EQLIHSIEHT…LICYKIPLSR (217 aa)). At His325 the chain carries Phosphohistidine; by autocatalysis.

Post-translationally, autophosphorylated.

Its subcellular location is the cell membrane. It carries out the reaction ATP + protein L-histidine = ADP + protein N-phospho-L-histidine.. Member of the two-component regulatory system HptS/HptR that regulates genes involved in hexose phosphate transport system in response to changes in extracellular phosphate sources. May act as a sensor protein kinase which is autophosphorylated at a histidine residue and transfers its phosphate group to the conserved aspartic acid residue in the regulatory domain of HptS. In turn, HptS antagonizes CcpA-dependent transcription of a subset of CcpA-regulated genes involved in antibiotic susceptibility. The protein is Sensor protein kinase HptS (hptS) of Staphylococcus aureus (strain USA300).